Consider the following 319-residue polypeptide: 4-hydroxy-3-methylbut-2-enyl diphosphate reductase (319 aa).

[4Fe-4S] cluster is bound at residue Cys-17. Residues His-46 and His-79 each coordinate (2E)-4-hydroxy-3-methylbut-2-enyl diphosphate. Dimethylallyl diphosphate contacts are provided by His-46 and His-79. Residues His-46 and His-79 each contribute to the isopentenyl diphosphate site. Cys-101 contacts [4Fe-4S] cluster. His-129 contributes to the (2E)-4-hydroxy-3-methylbut-2-enyl diphosphate binding site. His-129 lines the dimethylallyl diphosphate pocket. His-129 contributes to the isopentenyl diphosphate binding site. Glu-131 serves as the catalytic Proton donor. Thr-170 serves as a coordination point for (2E)-4-hydroxy-3-methylbut-2-enyl diphosphate. Residue Cys-200 coordinates [4Fe-4S] cluster. (2E)-4-hydroxy-3-methylbut-2-enyl diphosphate is bound by residues Ser-228, Ser-229, Asn-230, and Ser-273. Residues Ser-228, Ser-229, Asn-230, and Ser-273 each contribute to the dimethylallyl diphosphate site. Isopentenyl diphosphate-binding residues include Ser-228, Ser-229, Asn-230, and Ser-273.

This sequence belongs to the IspH family. It depends on [4Fe-4S] cluster as a cofactor.

It carries out the reaction isopentenyl diphosphate + 2 oxidized [2Fe-2S]-[ferredoxin] + H2O = (2E)-4-hydroxy-3-methylbut-2-enyl diphosphate + 2 reduced [2Fe-2S]-[ferredoxin] + 2 H(+). It catalyses the reaction dimethylallyl diphosphate + 2 oxidized [2Fe-2S]-[ferredoxin] + H2O = (2E)-4-hydroxy-3-methylbut-2-enyl diphosphate + 2 reduced [2Fe-2S]-[ferredoxin] + 2 H(+). Its pathway is isoprenoid biosynthesis; dimethylallyl diphosphate biosynthesis; dimethylallyl diphosphate from (2E)-4-hydroxy-3-methylbutenyl diphosphate: step 1/1. It participates in isoprenoid biosynthesis; isopentenyl diphosphate biosynthesis via DXP pathway; isopentenyl diphosphate from 1-deoxy-D-xylulose 5-phosphate: step 6/6. In terms of biological role, catalyzes the conversion of 1-hydroxy-2-methyl-2-(E)-butenyl 4-diphosphate (HMBPP) into a mixture of isopentenyl diphosphate (IPP) and dimethylallyl diphosphate (DMAPP). Acts in the terminal step of the DOXP/MEP pathway for isoprenoid precursor biosynthesis. This is 4-hydroxy-3-methylbut-2-enyl diphosphate reductase from Cereibacter sphaeroides (strain ATCC 17025 / ATH 2.4.3) (Rhodobacter sphaeroides).